The chain runs to 61 residues: Small ribosomal subunit protein uS14 (61 aa).

Residues Cys24, Cys27, Cys40, and Cys43 each contribute to the Zn(2+) site.

Belongs to the universal ribosomal protein uS14 family. Zinc-binding uS14 subfamily. As to quaternary structure, part of the 30S ribosomal subunit. Contacts proteins S3 and S10. The cofactor is Zn(2+).

Binds 16S rRNA, required for the assembly of 30S particles and may also be responsible for determining the conformation of the 16S rRNA at the A site. In Campylobacter jejuni subsp. jejuni serotype O:6 (strain 81116 / NCTC 11828), this protein is Small ribosomal subunit protein uS14.